The primary structure comprises 569 residues: Cell death protein 4 (569 aa).

A CARD domain is found at Met-1–Leu-91. The NB-ARC domain occupies Asp-116–Ile-442. ATP contacts are provided by residues Phe-131, Gly-162–Val-167, and Gln-171. Ser-166 provides a ligand contact to Mg(2+).

In terms of assembly, associates as an asymmetric homodimer with ced-9. Upon release from ced-9, forms an octamer, known as the apoptosome, and interacts with ced-3; the interaction results in ced-3 autoproteolytic cleavage and activation. The octamer (a tetramer of an asymmetric dimer) also interacts with two processed ced-3 to form a stable holoenzyme. Interacts with sex-determining protein fem-1. May form a complex composed of ced-3, ced-4 and mac-1 or of ced-9, ced-4 and mac-1. Within the complex, interacts with ced-4.

The protein localises to the mitochondrion. It localises to the cytoplasm. The protein resides in the perinuclear region. Functionally, plays a major role in programmed cell death (PCD, apoptosis). egl-1 binds to and directly inhibits the activity of ced-9, releasing the cell death activator ced-4 from a ced-9/ced-4 containing protein complex and allowing ced-4 to induce caspase ced-3 autoproteolytic cleavage and activation. Also forms a holoenzyme with processed ced-3 enhancing ced-3 activity. Component of the egl-1, ced-9, ced-4 and ced-3 apoptotic signaling cascade required for the initiation of programmed cell death in cells fated to die during embryonic and postembryonic development. During oogenesis, required for germline apoptosis downstream of ced-9 and upstream of ced-3 but independently of egl-1. May regulate germline apoptosis in response to DNA damage, probably downstream of let-60/ras and mpk-1 pathway. Regulates CEP neuron apoptosis in response to high Al(3+) levels. During male tail morphogenesis, promotes apoptosis of the tail-spike cell. During larval development, required for the elimination of transient presynaptic components downstream of egl-1 and ced-9 and upstream of ced-3 apoptotic pathway. Together with ain-1, a component of the miRNA-induced-silencing complex (miRISC), and probably upstream of ced-3, regulates temporal cell fate patterning during larval development. May play a role in resistance to S.typhimurium-mediated infection. The protein is Cell death protein 4 of Caenorhabditis briggsae.